The sequence spans 70 residues: MSQKMTGSVKWFNETKGFGFISQDNGGQDVFVHFKSIVSEGFKTLAEGQRVSFTVEQGKKGPQAAQVTAL.

The CSD domain occupies 7 to 67; the sequence is GSVKWFNETK…GKKGPQAAQV (61 aa).

It localises to the cytoplasm. The sequence is that of Cold shock-like protein CspA (cspA) from Vibrio cholerae serotype O1 (strain ATCC 39315 / El Tor Inaba N16961).